The chain runs to 621 residues: Putative DNA 3'-5' helicase Rad25 (621 aa).

Residues 268–417 (VERFTEQGSG…EIFTLIGPPI (150 aa)) form the Helicase ATP-binding domain. Residue 281–288 (GPPGSGKT) coordinates ATP. Residues 371-374 (DEVH) carry the DEAH box motif. Positions 441–465 (PWGDETEQSEYSSTSGHDRRQAAAS) are disordered. The Helicase C-terminal domain maps to 469-621 (KIDEIRYALA…EAVEPPAKTE (153 aa)).

The protein belongs to the helicase family. RAD25/XPB subfamily.

The catalysed reaction is Couples ATP hydrolysis with the unwinding of duplex DNA by translocating in the 3'-5' direction.. It catalyses the reaction ATP + H2O = ADP + phosphate + H(+). The protein is Putative DNA 3'-5' helicase Rad25 of Haloarcula marismortui (strain ATCC 43049 / DSM 3752 / JCM 8966 / VKM B-1809) (Halobacterium marismortui).